The sequence spans 390 residues: Transforming growth factor beta-1 proprotein (390 aa).

The first 29 residues, 1 to 29, serve as a signal peptide directing secretion; sequence MPPSGLRLLPLLLPLLWLLMLTPGRPVAG. Positions 30–74 are straightjacket domain; that stretch reads LSTCKTIDMELVKRKGIEAIRGQILSKLRLASPPSQGDVPPGPLP. Positions 75-271 are arm domain; it reads EAILALYNST…ATPLERAQHL (197 aa). N-linked (GlcNAc...) asparagine glycosylation is found at Asn-82, Asn-136, and Asn-176. The bowtie tail stretch occupies residues 226 to 252; the sequence is DSKDNTLQVDINGFSSGRRGDLATIHG. A Cell attachment site motif is present at residues 244-246; the sequence is RGD. Intrachain disulfides connect Cys-285–Cys-294, Cys-293–Cys-356, Cys-322–Cys-387, and Cys-326–Cys-389.

The protein belongs to the TGF-beta family. Homodimer; disulfide-linked. Interacts with the serine proteases, HTRA1 and HTRA3: the interaction with either inhibits TGFB1-mediated signaling and the HTRA protease activity is required for this inhibition. May interact with THSD4; this interaction may lead to sequestration by FBN1 microfibril assembly and attenuation of TGFB signaling. Interacts with CD109, DPT and ASPN. Interacts with EFEMP2. Interacts with TSKU; the interaction contributes to regulation of the hair cycle. Interacts with TGFBR3. In terms of assembly, homodimer; disulfide-linked. Interacts with transforming growth factor beta-1 (TGF-beta-1) chain; interaction is non-covalent and maintains TGF-beta-1 in a latent state; each latency-associated peptide (LAP) monomer interacts with TGF-beta-1 in the other monomer. Interacts with LTBP1; leading to regulation of TGF-beta-1 activation. Interacts with LRRC32/GARP; leading to regulation of TGF-beta-1 activation on the surface of activated regulatory T-cells (Tregs). Interacts with LRRC33/NRROS; leading to regulation of TGF-beta-1 activation in macrophages and microglia. Interacts (via cell attachment site) with integrins ITGAV and ITGB6 (ITGAV:ITGB6), leading to release of the active TGF-beta-1. Interacts with NREP; the interaction results in a decrease in TGFB1 autoinduction. Interacts with HSP90AB1; inhibits latent TGFB1 activation. As to quaternary structure, homodimer; disulfide-linked. Interacts with TGF-beta receptors (TGFBR1 and TGFBR2), leading to signal transduction. Post-translationally, transforming growth factor beta-1 proprotein: The precursor proprotein is cleaved in the Golgi apparatus by FURIN to form Transforming growth factor beta-1 (TGF-beta-1) and Latency-associated peptide (LAP) chains, which remain non-covalently linked, rendering TGF-beta-1 inactive. In terms of processing, N-glycosylated. Deglycosylation leads to activation of Transforming growth factor beta-1 (TGF-beta-1); mechanisms triggering deglycosylation-driven activation of TGF-beta-1 are however unclear.

Its subcellular location is the secreted. The protein resides in the extracellular space. It is found in the extracellular matrix. Its function is as follows. Transforming growth factor beta-1 proprotein: Precursor of the Latency-associated peptide (LAP) and Transforming growth factor beta-1 (TGF-beta-1) chains, which constitute the regulatory and active subunit of TGF-beta-1, respectively. Functionally, required to maintain the Transforming growth factor beta-1 (TGF-beta-1) chain in a latent state during storage in extracellular matrix. Associates non-covalently with TGF-beta-1 and regulates its activation via interaction with 'milieu molecules', such as LTBP1, LRRC32/GARP and LRRC33/NRROS, that control activation of TGF-beta-1. Interaction with LRRC33/NRROS regulates activation of TGF-beta-1 in macrophages and microglia. Interaction with LRRC32/GARP controls activation of TGF-beta-1 on the surface of activated regulatory T-cells (Tregs). Interaction with integrins (ITGAV:ITGB6 or ITGAV:ITGB8) results in distortion of the Latency-associated peptide chain and subsequent release of the active TGF-beta-1. Multifunctional protein that regulates the growth and differentiation of various cell types and is involved in various processes, such as normal development, immune function, microglia function and responses to neurodegeneration. Activation into mature form follows different steps: following cleavage of the proprotein in the Golgi apparatus, Latency-associated peptide (LAP) and Transforming growth factor beta-1 (TGF-beta-1) chains remain non-covalently linked rendering TGF-beta-1 inactive during storage in extracellular matrix. At the same time, LAP chain interacts with 'milieu molecules', such as LTBP1, LRRC32/GARP and LRRC33/NRROS that control activation of TGF-beta-1 and maintain it in a latent state during storage in extracellular milieus. TGF-beta-1 is released from LAP by integrins (ITGAV:ITGB6 or ITGAV:ITGB8): integrin-binding to LAP stabilizes an alternative conformation of the LAP bowtie tail and results in distortion of the LAP chain and subsequent release of the active TGF-beta-1. Once activated following release of LAP, TGF-beta-1 acts by binding to TGF-beta receptors (TGFBR1 and TGFBR2), which transduce signal. While expressed by many cells types, TGF-beta-1 only has a very localized range of action within cell environment thanks to fine regulation of its activation by Latency-associated peptide chain (LAP) and 'milieu molecules'. Plays an important role in bone remodeling: acts as a potent stimulator of osteoblastic bone formation, causing chemotaxis, proliferation and differentiation in committed osteoblasts. Can promote either T-helper 17 cells (Th17) or regulatory T-cells (Treg) lineage differentiation in a concentration-dependent manner. At high concentrations, leads to FOXP3-mediated suppression of RORC and down-regulation of IL-17 expression, favoring Treg cell development. At low concentrations in concert with IL-6 and IL-21, leads to expression of the IL-17 and IL-23 receptors, favoring differentiation to Th17 cells. Stimulates sustained production of collagen through the activation of CREB3L1 by regulated intramembrane proteolysis (RIP). Mediates SMAD2/3 activation by inducing its phosphorylation and subsequent translocation to the nucleus. Positively regulates odontoblastic differentiation in dental papilla cells, via promotion of IPO7-mediated translocation of phosphorylated SMAD2 to the nucleus and subsequent transcription of target genes. Can induce epithelial-to-mesenchymal transition (EMT) and cell migration in various cell types. This is Transforming growth factor beta-1 proprotein (TGFB1) from Ovis aries (Sheep).